Reading from the N-terminus, the 704-residue chain is Matrix metalloproteinase-9 (704 aa).

The signal sequence occupies residues 1–19; it reads MSPRQPLVLVFLVLGCCSA. Positions 20 to 106 are cleaved as a propeptide — activation peptide; it reads APRPHKPTVV…PRCGVPDLGK (87 aa). Asparagine 38 carries an N-linked (GlcNAc...) asparagine glycan. Positions 97 to 104 match the Cysteine switch motif; sequence PRCGVPDL. Cysteine 99 is a Zn(2+) binding site. Asparagine 127 is a glycosylation site (N-linked (GlcNAc...) asparagine). Residues aspartate 131 and aspartate 165 each coordinate Ca(2+). 2 residues coordinate Zn(2+): histidine 175 and aspartate 177. 4 residues coordinate Ca(2+): aspartate 182, glycine 183, asparagine 185, and leucine 187. Histidine 190 lines the Zn(2+) pocket. Positions 197, 199, and 201 each coordinate Ca(2+). Histidine 203 contacts Zn(2+). Aspartate 205, aspartate 206, and glutamate 208 together coordinate Ca(2+). Fibronectin type-II domains follow at residues 225-273, 283-331, and 342-390; these read ADGA…FCPS, GDGK…FCPT, and SAGE…FCPD. 6 disulfides stabilise this stretch: cysteine 230–cysteine 256, cysteine 244–cysteine 271, cysteine 288–cysteine 314, cysteine 302–cysteine 329, cysteine 347–cysteine 373, and cysteine 361–cysteine 388. Position 401 (histidine 401) interacts with Zn(2+). The active site involves glutamate 402. Zn(2+) contacts are provided by histidine 405 and histidine 411. Residues 434–507 form a disordered region; sequence DDVRGIQHLY…PSEAPTVPVD (74 aa). 2 stretches are compositionally biased toward pro residues: residues 450–461 and 483–496; these read EPQPPTAPPTAP and TGPP…PPTA. Cysteines 513 and 701 form a disulfide. Hemopexin repeat units follow at residues 515 to 560, 561 to 605, 607 to 654, and 655 to 701; these read VNIF…WPAL, PRKL…GLGP, VTQV…YPGV, and PLNT…ILQC.

The protein belongs to the peptidase M10A family. In terms of assembly, exists as monomer or homodimer; disulfide-linked. Also exists as heterodimer with LCN2. Macrophages and transformed cell lines produce only the monomeric form. Interacts with ECM1. It depends on Zn(2+) as a cofactor. Ca(2+) is required as a cofactor. Post-translationally, N- and O-glycosylated.

The protein localises to the secreted. The protein resides in the extracellular space. It is found in the extracellular matrix. It catalyses the reaction Cleavage of gelatin types I and V and collagen types IV and V.. Matrix metalloproteinase that plays an essential role in local proteolysis of the extracellular matrix and in leukocyte migration. Could play a role in bone osteoclastic resorption. Cleaves KiSS1 at a Gly-|-Leu bond. Cleaves NINJ1 to generate the Secreted ninjurin-1 form. Cleaves type IV and type V collagen into large C-terminal three quarter fragments and shorter N-terminal one quarter fragments. Degrades fibronectin but not laminin or Pz-peptide. This chain is Matrix metalloproteinase-9 (MMP9), found in Canis lupus familiaris (Dog).